The following is a 402-amino-acid chain: Tryptophan synthase beta chain (402 aa).

K91 bears the N6-(pyridoxal phosphate)lysine mark.

It belongs to the TrpB family. Tetramer of two alpha and two beta chains. Pyridoxal 5'-phosphate is required as a cofactor.

It catalyses the reaction (1S,2R)-1-C-(indol-3-yl)glycerol 3-phosphate + L-serine = D-glyceraldehyde 3-phosphate + L-tryptophan + H2O. The protein operates within amino-acid biosynthesis; L-tryptophan biosynthesis; L-tryptophan from chorismate: step 5/5. Its function is as follows. The beta subunit is responsible for the synthesis of L-tryptophan from indole and L-serine. This is Tryptophan synthase beta chain (trpB) from Lactococcus lactis subsp. lactis (strain IL1403) (Streptococcus lactis).